Consider the following 330-residue polypeptide: NADH-quinone oxidoreductase subunit H (330 aa).

9 helical membrane passes run 5-25 (LFFI…IACL), 44-64 (IGPD…MIKL), 78-98 (FIFL…LAPI), 122-142 (VLYV…AGLA), 156-176 (VMGL…VIMI), 192-212 (IFGW…MASF), 240-260 (MRWA…SIVI), 271-293 (FWFV…FFLW), and 310-330 (CWKI…IALI).

Belongs to the complex I subunit 1 family. As to quaternary structure, NDH-1 is composed of 14 different subunits. Subunits NuoA, H, J, K, L, M, N constitute the membrane sector of the complex.

It is found in the cell inner membrane. The enzyme catalyses a quinone + NADH + 5 H(+)(in) = a quinol + NAD(+) + 4 H(+)(out). Its function is as follows. NDH-1 shuttles electrons from NADH, via FMN and iron-sulfur (Fe-S) centers, to quinones in the respiratory chain. The immediate electron acceptor for the enzyme in this species is believed to be ubiquinone. Couples the redox reaction to proton translocation (for every two electrons transferred, four hydrogen ions are translocated across the cytoplasmic membrane), and thus conserves the redox energy in a proton gradient. This subunit may bind ubiquinone. The protein is NADH-quinone oxidoreductase subunit H of Campylobacter curvus (strain 525.92).